We begin with the raw amino-acid sequence, 435 residues long: Transmembrane protease serine 4 (435 aa).

Over 1–30 the chain is Cytoplasmic; it reads MESDSGQPLNNRDIVPFRKPRRPQETFKKV. The chain crosses the membrane as a helical; Signal-anchor for type II membrane protein span at residues 31-51; the sequence is GIPIIAVLLSLIALVIVALLI. The Extracellular segment spans residues 52 to 435; that stretch reads KVILDKYYFI…WIYNVRKSEM (384 aa). Positions 59–101 constitute an LDL-receptor class A domain; it reads YFICGSPLTFIQRGQLCDGHLDCASGEDEEHCVKDFPEKPGVA. 8 disulfides stabilise this stretch: cysteine 62/cysteine 81, cysteine 75/cysteine 90, cysteine 125/cysteine 181, cysteine 138/cysteine 191, cysteine 194/cysteine 308, cysteine 228/cysteine 244, cysteine 354/cysteine 370, and cysteine 381/cysteine 408. The SRCR domain maps to 102–202; the sequence is VRLSKDRSTL…DCGKSLKTPR (101 aa). N-linked (GlcNAc...) asparagine glycosylation is found at asparagine 128 and asparagine 176. One can recognise a Peptidase S1 domain in the interval 203–432; the sequence is VVGGVEAPVD…YLNWIYNVRK (230 aa). Active-site charge relay system residues include histidine 243 and aspartate 288. The active-site Charge relay system is serine 385.

Belongs to the peptidase S1 family. Proteolytically processed; probably by an autocatalytic mechanism.

It localises to the cell membrane. Its subcellular location is the secreted. Plasma membrane-anchored serine protease that directly induces processing of pro-uPA/PLAU into the active form through proteolytic activity. Seems to be capable of activating ENaC. This is Transmembrane protease serine 4 from Mus musculus (Mouse).